The following is a 265-amino-acid chain: Glutamate racemase (265 aa).

Substrate is bound by residues 12-13 (DS) and 44-45 (YG). The Proton donor/acceptor role is filled by cysteine 75. 76-77 (NT) contacts substrate. Catalysis depends on cysteine 186, which acts as the Proton donor/acceptor. Residue 187 to 188 (TH) participates in substrate binding.

The protein belongs to the aspartate/glutamate racemases family.

The enzyme catalyses L-glutamate = D-glutamate. It participates in cell wall biogenesis; peptidoglycan biosynthesis. Its function is as follows. Provides the (R)-glutamate required for cell wall biosynthesis. This Pseudomonas putida (strain ATCC 47054 / DSM 6125 / CFBP 8728 / NCIMB 11950 / KT2440) protein is Glutamate racemase.